The primary structure comprises 83 residues: MKTVFAILFLTFIALTCARNYEDLKEKIKNEVEREIFEDLEEESDELENNFKKFNDAKPWTRWIRWKTIVPFIPAVIAAAGKK.

The signal sequence occupies residues 1-18 (MKTVFAILFLTFIALTCA). Positions 19-57 (RNYEDLKEKIKNEVEREIFEDLEEESDELENNFKKFNDA) are excised as a propeptide. Ala-80 is subject to Alanine amide.

Belongs to the arminin family. In terms of tissue distribution, expressed in entodermal epithelium along the body column.

Its subcellular location is the secreted. The protein localises to the target cell membrane. Its function is as follows. Antimicrobial peptide with a broad-spectrum antimicrobial activity. Keeps its antibacterial activity under a wide range of salt concentrations that mimic physiological conditions of human blood, which is surprising, since Hydra is an obligate freshwater animal with nearly no salt tolerance. Does not affect red blood cells. The chain is Arminin 3a from Hydra vulgaris (Hydra).